Consider the following 182-residue polypeptide: Interferon beta (182 aa).

Positions 1–21 (MNNRWILHAAFLLCFSTTALS) are cleaved as a signal peptide. Phosphotyrosine is present on tyrosine 24. N-linked (GlcNAc...) asparagine glycans are attached at residues asparagine 50, asparagine 90, and asparagine 97.

It belongs to the alpha/beta interferon family. In terms of assembly, monomer. This beta interferon does not have a disulfide bond.

The protein resides in the secreted. Functionally, type I interferon cytokine that plays a key role in the innate immune response to infection, developing tumors and other inflammatory stimuli. Signals via binding to high-affinity (IFNAR2) and low-affinity (IFNAR1) heterodimeric receptor, activating the canonical Jak-STAT signaling pathway resulting in transcriptional activation or repression of interferon-regulated genes that encode the effectors of the interferon response, such as antiviral proteins, regulators of cell proliferation and differentiation, and immunoregulatory proteins. Signals mostly via binding to a IFNAR1-IFNAR2 heterodimeric receptor, but can also function with IFNAR1 alone and independently of Jak-STAT pathways. Elicits a wide variety of responses, including antiviral and antibacterial activities, and can regulate the development of B-cells, myelopoiesis and lipopolysaccharide (LPS)-inducible production of tumor necrosis factor. Plays a role in neuronal homeostasis by regulating dopamine turnover and protecting dopaminergic neurons: acts by promoting neuronal autophagy and alpha-synuclein clearance, thereby preventing dopaminergic neuron loss. IFNB1 is more potent than interferon-alpha (IFN-alpha) in inducing the apoptotic and antiproliferative pathways required for control of tumor cell growth. In Mus musculus (Mouse), this protein is Interferon beta.